Consider the following 206-residue polypeptide: Small ribosomal subunit protein uS4 (206 aa).

Positions Gly96–Lys156 constitute an S4 RNA-binding domain.

Belongs to the universal ribosomal protein uS4 family. As to quaternary structure, part of the 30S ribosomal subunit. Contacts protein S5. The interaction surface between S4 and S5 is involved in control of translational fidelity.

In terms of biological role, one of the primary rRNA binding proteins, it binds directly to 16S rRNA where it nucleates assembly of the body of the 30S subunit. With S5 and S12 plays an important role in translational accuracy. The sequence is that of Small ribosomal subunit protein uS4 from Actinobacillus succinogenes (strain ATCC 55618 / DSM 22257 / CCUG 43843 / 130Z).